Consider the following 301-residue polypeptide: Helicase VP6-A (301 aa).

Disordered regions lie at residues 1–99 (MIDW…TTGT) and 163–208 (RRKE…TSVG). Basic and acidic residues-rich tracts occupy residues 8 to 30 (ESGK…KDGE), 37 to 55 (GQKK…DRRV), and 67 to 81 (GFRE…RGDG). Position 82 (Lys82) interacts with ATP. 2 stretches are compositionally biased toward basic and acidic residues: residues 163 to 177 (RRKE…VAEK) and 186 to 202 (VHGD…KTPE).

It belongs to the orbivirus VP6 family. In terms of assembly, homohexamer.

The protein localises to the virion. It catalyses the reaction ATP + H2O = ADP + phosphate + H(+). ATP dependent RNA helicase essential for RNA packaging and viral transcription. Possesses ss- and dsRNA-binding capacity. In Bluetongue virus 2 (isolate USA) (BTV 2), this protein is Helicase VP6-A (Segment-9).